The chain runs to 454 residues: MGSRLNFKSFVDGVSEQQPTVGTSLPLTRQNSVFSLTFDEFQNSWGGGIGKDFGSMNMDELLKNIWTAEESHSMMGNNTSYTNISNGNSGNTVINGGGNNIGGLAVGVGGESGGFFTGGSLQRQGSLTLPRTISQKRVDDVWKELMKEDDIGNGVVNGGTSGIPQRQQTLGEMTLEEFLVRAGVVREEPQPVESVTNFNGGFYGFGSNGGLGTASNGFVANQPQDLSGNGVAVRQDLLTAQTQPLQMQQPQMVQQPQMVQQPQQLIQTQERPFPKQTTIAFSNTVDVVNRSQPATQCQEVKPSILGIHNHPMNNNLLQAVDFKTGVTVAAVSPGSQMSPDLTPKSALDASLSPVPYMFGRVRKTGAVLEKVIERRQKRMIKNRESAARSRARKQAYTMELEAEIAQLKELNEELQKKQVEIMEKQKNQLLEPLRQPWGMGCKRQCLRRTLTGPW.

3 positions are modified to phosphoserine: serine 32, serine 55, and serine 126. Phosphothreonine is present on threonine 169. Residues 372-435 (IERRQKRMIK…KNQLLEPLRQ (64 aa)) enclose the bZIP domain. Residues 374–393 (RRQKRMIKNRESAARSRARK) form a basic motif region. The interval 400-414 (LEAEIAQLKELNEEL) is leucine-zipper.

The protein belongs to the bZIP family. ABI5 subfamily. As to quaternary structure, DNA-binding heterodimer. Interacts with ABI3 and the AFP proteins AFP1, AFP2, AFP3 and AFP4. As to expression, expressed in roots and flowers.

It is found in the nucleus. In terms of biological role, binds to the ABA-responsive element (ABRE). Mediates stress-responsive ABA signaling. The polypeptide is ABSCISIC ACID-INSENSITIVE 5-like protein 6 (ABF3) (Arabidopsis thaliana (Mouse-ear cress)).